We begin with the raw amino-acid sequence, 325 residues long: Eukaryotic translation initiation factor 3 subunit I (325 aa).

WD repeat units lie at residues 8–47 (GHER…RLGT), 50–91 (GHTG…ALLK), 144–183 (CNDS…VLVN), and 186–225 (EHSR…HQKT). Thr219 is modified (phosphothreonine). N6-acetyllysine is present on Lys264. Residue Lys282 forms a Glycyl lysine isopeptide (Lys-Gly) (interchain with G-Cter in ubiquitin) linkage. One copy of the WD 5 repeat lies at 283-324 (GHFGLINSVAFHPDGKSYSSGGEDGYVRIHYFDPQYFEFEFE). The residue at position 308 (Tyr308) is a Phosphotyrosine.

The protein belongs to the eIF-3 subunit I family. As to quaternary structure, component of the eukaryotic translation initiation factor 3 (eIF-3) complex, which is composed of 13 subunits: EIF3A, EIF3B, EIF3C, EIF3D, EIF3E, EIF3F, EIF3G, EIF3H, EIF3I, EIF3J, EIF3K, EIF3L and EIF3M. The eIF-3 complex appears to include 3 stable modules: module A is composed of EIF3A, EIF3B, EIF3G and EIF3I; module B is composed of EIF3F, EIF3H, and EIF3M; and module C is composed of EIF3C, EIF3D, EIF3E, EIF3K and EIF3L. EIF3C of module C binds EIF3B of module A and EIF3H of module B, thereby linking the three modules. EIF3J is a labile subunit that binds to the eIF-3 complex via EIF3B. The eIF-3 complex interacts with RPS6KB1 under conditions of nutrient depletion. Mitogenic stimulation leads to binding and activation of a complex composed of MTOR and RPTOR, leading to phosphorylation and release of RPS6KB1 and binding of EIF4B to eIF-3. Post-translationally, phosphorylated by TGF-beta type II receptor.

The protein localises to the cytoplasm. Component of the eukaryotic translation initiation factor 3 (eIF-3) complex, which is required for several steps in the initiation of protein synthesis. The eIF-3 complex associates with the 40S ribosome and facilitates the recruitment of eIF-1, eIF-1A, eIF-2:GTP:methionyl-tRNAi and eIF-5 to form the 43S pre-initiation complex (43S PIC). The eIF-3 complex stimulates mRNA recruitment to the 43S PIC and scanning of the mRNA for AUG recognition. The eIF-3 complex is also required for disassembly and recycling of post-termination ribosomal complexes and subsequently prevents premature joining of the 40S and 60S ribosomal subunits prior to initiation. The eIF-3 complex specifically targets and initiates translation of a subset of mRNAs involved in cell proliferation, including cell cycling, differentiation and apoptosis, and uses different modes of RNA stem-loop binding to exert either translational activation or repression. The protein is Eukaryotic translation initiation factor 3 subunit I of Pongo abelii (Sumatran orangutan).